The following is a 537-amino-acid chain: MKLLAVRRLLRIQSVVVRYRLDDLLFDQPLLPWWLRALGYLLPWRWLPRRRSEQPRAVRLRLALQDLGPIFIKFGQILSTRRDLLPEDIADELTWLQDRVPPFNPQQSVALIEEQLGARVDEAFARFDSEPLASASVAQVHAAQLKTGEEVVVKVVRPGLKAVIRQDLAWLYLFARLAERASTEARRLHLVDVVSDYEKTIYDELDLLREAANASQLKRNFEGSPLLYVPQIYWDWCRPKVLVMERIYGVPVTDLAALVDQGTDLKLLAERGVEIFFTQVFRDSFFHADMHPGNIFVSTRQPWDPQYIAIDCGIVGSLTPQDQDYLARNLLAFFKRDYRKVAQLHIDSGWVPADTQVNEFEAAIRTVCEPIFEKPLKDISFGQLLLRLFQTARRFNMEVQPQLVLLQKTLLNIEGLGRQLYPELDLWTTAKPFLERWMRKRMSPKAMLDNLQGQLEQLPHLAQMTRTALEDISRPAWDTRKRERHDHHLLRLLGAALLAGGVLLALQTPPTSANAWPSWLMLASGLYLLVGRRRLSD.

A helical transmembrane segment spans residues 30-47 (LLPWWLRALGYLLPWRWL). In terms of domain architecture, Protein kinase spans 126–490 (RFDSEPLASA…KRERHDHHLL (365 aa)). ATP is bound by residues 132-140 (LASASVAQV) and lysine 154. Catalysis depends on aspartate 289, which acts as the Proton acceptor. 2 helical membrane-spanning segments follow: residues 489–507 (LLRL…LALQ) and 513–530 (ANAW…YLLV).

The protein belongs to the ABC1 family. UbiB subfamily.

Its subcellular location is the cell inner membrane. Its pathway is cofactor biosynthesis; ubiquinone biosynthesis [regulation]. Is probably a protein kinase regulator of UbiI activity which is involved in aerobic coenzyme Q (ubiquinone) biosynthesis. The sequence is that of Probable protein kinase UbiB from Azotobacter vinelandii (strain DJ / ATCC BAA-1303).